A 447-amino-acid chain; its full sequence is MNAWEVNFDGLVGLTHHYAGLSFGNEASTRHRFQVSNPRLAAKQGLLKMKKLADAGFPQAVIPPHERPFIPVLRQLGFRGSDEQVLEKVARQAPHWLSSVSSASPMWVANAATIAPSADTLDGKVHLTVANLNNKFHRSLEAPVTESLLKAIFNDEEKFSVHSALPQVALLGDEGAANHNRLGGHYGEPGMQLFVYGREEGNDTRPSRYPARQTREASEAVARLNQVNPQQVIFAQQNPDVIDQGVFHNDVIAVSNRQVLFCHQQAFARQSQLLANLRARVNGFMAIEVPATQVFVSDAVSTYLFNSQLLSRDDGSMVLVLPQECREHAGVWRYLNELLAADNPISELKVFDLRESMANGGGPACLRLRVVLTEEERRAVNPAVMMNDTLFNALNDWVDRYYRDRLTAADLADPQLLREGREALDTLTQLLDLGSVYPFQREGGGNG.

Residues 19–28 (AGLSFGNEAS), asparagine 110, and 137–138 (HR) contribute to the substrate site. Glutamate 174 is a catalytic residue. Arginine 212 lines the substrate pocket. The active site involves histidine 248. Substrate is bound by residues aspartate 250 and asparagine 359. The Nucleophile role is filled by cysteine 365.

This sequence belongs to the succinylarginine dihydrolase family. In terms of assembly, homodimer.

It catalyses the reaction N(2)-succinyl-L-arginine + 2 H2O + 2 H(+) = N(2)-succinyl-L-ornithine + 2 NH4(+) + CO2. The protein operates within amino-acid degradation; L-arginine degradation via AST pathway; L-glutamate and succinate from L-arginine: step 2/5. Catalyzes the hydrolysis of N(2)-succinylarginine into N(2)-succinylornithine, ammonia and CO(2). The polypeptide is N-succinylarginine dihydrolase (Escherichia coli O1:K1 / APEC).